The following is a 274-amino-acid chain: Undecaprenyl-diphosphatase (274 aa).

The next 8 helical transmembrane spans lie at 1–21, 42–62, 81–101, 107–127, 142–162, 184–204, 213–233, and 248–268; these read MDWL…FLPI, VKDT…LVYY, LWLG…LFGD, LFRP…MWLL, ISAG…LWPG, TKFS…LDFI, IGVV…YFAI, and FAVY…RGVL.

Belongs to the UppP family.

Its subcellular location is the cell membrane. The catalysed reaction is di-trans,octa-cis-undecaprenyl diphosphate + H2O = di-trans,octa-cis-undecaprenyl phosphate + phosphate + H(+). Functionally, catalyzes the dephosphorylation of undecaprenyl diphosphate (UPP). Confers resistance to bacitracin. This is Undecaprenyl-diphosphatase from Deinococcus radiodurans (strain ATCC 13939 / DSM 20539 / JCM 16871 / CCUG 27074 / LMG 4051 / NBRC 15346 / NCIMB 9279 / VKM B-1422 / R1).